The primary structure comprises 241 residues: UDP-2,3-diacylglucosamine hydrolase (241 aa).

Residues Asp9, His11, Asp42, Asn79, and His114 each coordinate Mn(2+). 79–80 (NR) contributes to the substrate binding site. Residues Asp122, Ser160, Asn164, Lys167, and His195 each contribute to the substrate site. Mn(2+) is bound by residues His195 and His197.

This sequence belongs to the LpxH family. It depends on Mn(2+) as a cofactor.

The protein localises to the cell inner membrane. It carries out the reaction UDP-2-N,3-O-bis[(3R)-3-hydroxytetradecanoyl]-alpha-D-glucosamine + H2O = 2-N,3-O-bis[(3R)-3-hydroxytetradecanoyl]-alpha-D-glucosaminyl 1-phosphate + UMP + 2 H(+). The protein operates within glycolipid biosynthesis; lipid IV(A) biosynthesis; lipid IV(A) from (3R)-3-hydroxytetradecanoyl-[acyl-carrier-protein] and UDP-N-acetyl-alpha-D-glucosamine: step 4/6. Its function is as follows. Hydrolyzes the pyrophosphate bond of UDP-2,3-diacylglucosamine to yield 2,3-diacylglucosamine 1-phosphate (lipid X) and UMP by catalyzing the attack of water at the alpha-P atom. Involved in the biosynthesis of lipid A, a phosphorylated glycolipid that anchors the lipopolysaccharide to the outer membrane of the cell. In Shewanella frigidimarina (strain NCIMB 400), this protein is UDP-2,3-diacylglucosamine hydrolase.